Reading from the N-terminus, the 534-residue chain is Pentatricopeptide repeat-containing protein At1g07590, mitochondrial (534 aa).

A mitochondrion-targeting transit peptide spans 1–20 (MRSIIALMRQREYFVQAIRR). PPR repeat units lie at residues 165 to 199 (NELL…GYRT), 200 to 234 (SHLV…KATP), 235 to 269 (HVST…GVEP), 270 to 300 (NEVS…IEKS), 305 to 335 (NWST…IRGF), 339 to 369 (RSKS…MKNV), 374 to 408 (ETEQ…GFKP), 409 to 443 (NSIT…KTSK), and 451 to 485 (WLET…KYNR).

Belongs to the PPR family. P subfamily.

The protein localises to the mitochondrion. The chain is Pentatricopeptide repeat-containing protein At1g07590, mitochondrial from Arabidopsis thaliana (Mouse-ear cress).